Reading from the N-terminus, the 163-residue chain is Photosystem II extrinsic protein V (163 aa).

Positions 1–26 are cleaved as a signal peptide; it reads MLKKCVWLAVALCLCLWQFTMGTALA. Heme c contacts are provided by H67 and H118.

Belongs to the cytochrome c family. PsbV subfamily. PSII is composed of 1 copy each of membrane proteins PsbA, PsbB, PsbC, PsbD, PsbE, PsbF, PsbH, PsbI, PsbJ, PsbK, PsbL, PsbM, PsbT, PsbX, PsbY, PsbZ, Psb30/Ycf12, peripheral proteins PsbO, CyanoQ (PsbQ), PsbU, PsbV and a large number of cofactors. It forms dimeric complexes. It depends on heme c as a cofactor.

Its subcellular location is the cellular thylakoid membrane. Functionally, one of the extrinsic, lumenal subunits of photosystem II (PSII). PSII is a light-driven water plastoquinone oxidoreductase, using light energy to abstract electrons from H(2)O, generating a proton gradient subsequently used for ATP formation. The extrinsic proteins stabilize the structure of photosystem II oxygen-evolving complex (OEC), the ion environment of oxygen evolution and protect the OEC against heat-induced inactivation. Low-potential cytochrome c that plays a role in the OEC of PSII. This Thermosynechococcus vestitus (strain NIES-2133 / IAM M-273 / BP-1) protein is Photosystem II extrinsic protein V.